The chain runs to 344 residues: MATPVNAQCSSKTWELSLYELHRTPQEAIMDGTEIAVSPRSLHSELMCPICLDMLKNTMTTKECLHRFCSDCIVTALRSGNKECPTCRKKLVSKRSLRPDPNFDALISKIYPSRDEYEAHQDRVLAKLNRLHNQQALSSSIEEGLKMQAMHRAQRVRKHQHESDNTTFSGGEDNCDSRSHVSNPSVHSNQEAGPSRKRSRASEDSGAEPDLSHEGGVRSPDPPGGGETGSEIELVFRAHPLLVEKDGYSQTRYVKTTANATVDHLSKYLALRIALEEEVLRGEAEGVTLGEVSEKQYTIYICTGVAGGQYTTLNGSLTLELVNEKYWKVSKPLELYYAPTKEQK.

The interaction with HIP2 stretch occupies residues 2–181; sequence ATPVNAQCSS…EDNCDSRSHV (180 aa). Residues 48–88 form an RING-type zinc finger; that stretch reads CPICLDMLKNTMTTKECLHRFCSDCIVTALRSGNKECPTCR. Residues 90–95 are interaction with nucleosomes via an acidic patch on histone H2A and histone H2B; it reads KLVSKR. Residues 148 to 230 form a disordered region; it reads QAMHRAQRVR…DPPGGGETGS (83 aa). Residues 180-192 are compositionally biased toward polar residues; that stretch reads HVSNPSVHSNQEA.

As to quaternary structure, component of chromatin-associated Polycomb (PcG) complexes. Component of a PRC1-like complex. Component of some MLL1/MLL complex.

The protein localises to the nucleus. It localises to the cytoplasm. Its subcellular location is the chromosome. It carries out the reaction S-ubiquitinyl-[E2 ubiquitin-conjugating enzyme]-L-cysteine + [acceptor protein]-L-lysine = [E2 ubiquitin-conjugating enzyme]-L-cysteine + N(6)-ubiquitinyl-[acceptor protein]-L-lysine.. It functions in the pathway protein modification; protein ubiquitination. E3 ubiquitin-protein ligase that mediates monoubiquitination of 'Lys-119' of histone H2A (H2AK119Ub), thereby playing a central role in histone code and gene regulation. H2AK119Ub gives a specific tag for epigenetic transcriptional repression. Essential component of a Polycomb group (PcG) multiprotein PRC1-like complex, a complex class required to maintain the transcriptionally repressive state of many genes, including Hox genes, throughout development. PcG PRC1 complex acts via chromatin remodeling and modification of histones, rendering chromatin heritably changed in its expressibility. The sequence is that of E3 ubiquitin-protein ligase RING2-A (rnf2-a) from Xenopus laevis (African clawed frog).